Reading from the N-terminus, the 638-residue chain is Phosphomethylpyrimidine synthase (638 aa).

Substrate-binding positions include Asn-236, Met-265, Tyr-294, His-330, 350 to 352 (SRG), 391 to 394 (DGLR), and Glu-430. His-434 serves as a coordination point for Zn(2+). Tyr-457 is a binding site for substrate. His-498 contacts Zn(2+). Positions 578, 581, and 586 each coordinate [4Fe-4S] cluster.

The protein belongs to the ThiC family. In terms of assembly, homodimer. [4Fe-4S] cluster is required as a cofactor.

The catalysed reaction is 5-amino-1-(5-phospho-beta-D-ribosyl)imidazole + S-adenosyl-L-methionine = 4-amino-2-methyl-5-(phosphooxymethyl)pyrimidine + CO + 5'-deoxyadenosine + formate + L-methionine + 3 H(+). The protein operates within cofactor biosynthesis; thiamine diphosphate biosynthesis. In terms of biological role, catalyzes the synthesis of the hydroxymethylpyrimidine phosphate (HMP-P) moiety of thiamine from aminoimidazole ribotide (AIR) in a radical S-adenosyl-L-methionine (SAM)-dependent reaction. This is Phosphomethylpyrimidine synthase from Polaromonas sp. (strain JS666 / ATCC BAA-500).